Consider the following 186-residue polypeptide: ATP synthase subunit b (186 aa).

Residues 25-45 form a helical membrane-spanning segment; sequence IVWSVVCVAIIAVVFYKYVIP.

It belongs to the ATPase B chain family. In terms of assembly, F-type ATPases have 2 components, F(1) - the catalytic core - and F(0) - the membrane proton channel. F(1) has five subunits: alpha(3), beta(3), gamma(1), delta(1), epsilon(1). F(0) has three main subunits: a(1), b(2) and c(10-14). The alpha and beta chains form an alternating ring which encloses part of the gamma chain. F(1) is attached to F(0) by a central stalk formed by the gamma and epsilon chains, while a peripheral stalk is formed by the delta and b chains.

It localises to the cell membrane. In terms of biological role, f(1)F(0) ATP synthase produces ATP from ADP in the presence of a proton or sodium gradient. F-type ATPases consist of two structural domains, F(1) containing the extramembraneous catalytic core and F(0) containing the membrane proton channel, linked together by a central stalk and a peripheral stalk. During catalysis, ATP synthesis in the catalytic domain of F(1) is coupled via a rotary mechanism of the central stalk subunits to proton translocation. Functionally, component of the F(0) channel, it forms part of the peripheral stalk, linking F(1) to F(0). The sequence is that of ATP synthase subunit b from Nocardia farcinica (strain IFM 10152).